Reading from the N-terminus, the 285-residue chain is 2-dehydro-3-deoxyphosphooctonate aldolase (285 aa).

It belongs to the KdsA family.

It localises to the cytoplasm. The enzyme catalyses D-arabinose 5-phosphate + phosphoenolpyruvate + H2O = 3-deoxy-alpha-D-manno-2-octulosonate-8-phosphate + phosphate. Its pathway is carbohydrate biosynthesis; 3-deoxy-D-manno-octulosonate biosynthesis; 3-deoxy-D-manno-octulosonate from D-ribulose 5-phosphate: step 2/3. It participates in bacterial outer membrane biogenesis; lipopolysaccharide biosynthesis. This Variovorax paradoxus (strain S110) protein is 2-dehydro-3-deoxyphosphooctonate aldolase.